The sequence spans 88 residues: MSDVAAILKVMPESPEIDLEALKETIKNTIDADSFERIEEEPIGFGLIALNVTIVVDDGEGGTEPAEEALAALDEIQSVEVTDVRRLM.

This sequence belongs to the EF-1-beta/EF-1-delta family.

Its function is as follows. Promotes the exchange of GDP for GTP in EF-1-alpha/GDP, thus allowing the regeneration of EF-1-alpha/GTP that could then be used to form the ternary complex EF-1-alpha/GTP/AAtRNA. The polypeptide is Elongation factor 1-beta (Methanosphaera stadtmanae (strain ATCC 43021 / DSM 3091 / JCM 11832 / MCB-3)).